The sequence spans 499 residues: Glutamyl-tRNA(Gln) amidotransferase subunit A (499 aa).

Residues Lys75 and Ser150 each act as charge relay system in the active site. Residue Ser174 is the Acyl-ester intermediate of the active site.

The protein belongs to the amidase family. GatA subfamily. As to quaternary structure, heterotrimer of A, B and C subunits.

The catalysed reaction is L-glutamyl-tRNA(Gln) + L-glutamine + ATP + H2O = L-glutaminyl-tRNA(Gln) + L-glutamate + ADP + phosphate + H(+). Allows the formation of correctly charged Gln-tRNA(Gln) through the transamidation of misacylated Glu-tRNA(Gln) in organisms which lack glutaminyl-tRNA synthetase. The reaction takes place in the presence of glutamine and ATP through an activated gamma-phospho-Glu-tRNA(Gln). This chain is Glutamyl-tRNA(Gln) amidotransferase subunit A, found in Ralstonia pickettii (strain 12J).